A 213-amino-acid polypeptide reads, in one-letter code: Octanoyltransferase (213 aa).

In terms of domain architecture, BPL/LPL catalytic spans 32-207 (DHTPDEIWLV…KLLALLNNPP (176 aa)). Substrate is bound by residues 71–78 (RGGQVTYH), 138–140 (SLG), and 151–153 (GLA). Catalysis depends on Cys-169, which acts as the Acyl-thioester intermediate.

It belongs to the LipB family.

Its subcellular location is the cytoplasm. It carries out the reaction octanoyl-[ACP] + L-lysyl-[protein] = N(6)-octanoyl-L-lysyl-[protein] + holo-[ACP] + H(+). Its pathway is protein modification; protein lipoylation via endogenous pathway; protein N(6)-(lipoyl)lysine from octanoyl-[acyl-carrier-protein]: step 1/2. Catalyzes the transfer of endogenously produced octanoic acid from octanoyl-acyl-carrier-protein onto the lipoyl domains of lipoate-dependent enzymes. Lipoyl-ACP can also act as a substrate although octanoyl-ACP is likely to be the physiological substrate. The chain is Octanoyltransferase from Enterobacter sp. (strain 638).